Consider the following 470-residue polypeptide: MTNFKDNDGDGTKLHVVMFPWLAFGHMVPYLELSKLIAQKGHKVSFISTPRNIDRLLPRLPENLSSVINFVKLSLPVGDNKLPEDGEATTDVPFELIPYLKIAYDGLKVPVTEFLESSKPDWVLQDFAGFWLPPISRRLGIKTGFFSAFNGATLGILKPPGFEEYRTSPADFMKPPKWVPFETSVAFKLFECRFIFKGFMAETTEGNVPDIHRVGGVIDGCDVIFVRSCYEYEAEWLGLTQELHRKPVIPVGVLPPKPDEKFEDTDTWLSVKKWLDSRKSKSIVYVAFGSEAKPSQTELNEIALGLELSGLPFFWVLKTRRGPWDTEPVELPEGFEERTADRGMVWRGWVEQLRTLSHDSIGLVLTHPGWGTIIEAIRFAKPMAMLVFVYDQGLNARVIEEKKIGYMIPRDETEGFFTKESVANSLRLVMVEEEGKVYRENVKEMKGVFGDMDRQDRYVDSFLEYLVTNR.

UDP-alpha-D-glucose-binding positions include Ser-290, 350–352 (VEQ), 367–375 (HPGWGTIIE), and 389–392 (VYDQ).

Belongs to the UDP-glycosyltransferase family.

In Arabidopsis thaliana (Mouse-ear cress), this protein is UDP-glycosyltransferase 91A1 (UGT91A1).